Consider the following 242-residue polypeptide: RNA polymerase sigma factor for flagellar operon (242 aa).

Residues 55-68 (DMQQIGLIALVEAG) carry the Polymerase core binding motif. Positions 211-230 (LHEIALVLDLTPPRICQLHK) form a DNA-binding region, H-T-H motif.

The protein belongs to the sigma-70 factor family.

Its function is as follows. Sigma factors are initiation factors that promote the attachment of RNA polymerase to specific initiation sites and are then released. This alternative sigma factor is specific for the flagellin gene (fliC) expression. This Vibrio parahaemolyticus serotype O3:K6 (strain RIMD 2210633) protein is RNA polymerase sigma factor for flagellar operon (lafS).